We begin with the raw amino-acid sequence, 280 residues long: Gastrula zinc finger protein XlCGF46.1 (280 aa).

10 consecutive C2H2-type zinc fingers follow at residues 6–28 (FACK…KLMH), 34–56 (FECT…QLIH), 62–84 (FVCP…LLCH), 90–112 (FTCK…KLTH), 118–140 (FICS…QLIH), 146–168 (YVCT…LRTH), 174–196 (FKCE…KVTH), 202–224 (FTCE…QLTH), 230–252 (FKCE…QRFH), and 258–280 (YKCN…ELSH).

The protein belongs to the krueppel C2H2-type zinc-finger protein family.

Its subcellular location is the nucleus. In terms of biological role, may be involved in transcriptional regulation. This Xenopus laevis (African clawed frog) protein is Gastrula zinc finger protein XlCGF46.1.